The chain runs to 372 residues: MKNLYEILEVNENATQEEIKKSYRRLAKKYHPDINSGDSEAENKFKEINGAYEVLGDKEKRKKYDMYGDRMFDQGTGGGFSDFGDIFGDFFGDIFGGFSSRSYSKNPNAPRKGSNIQVELEIDFEDSINGTKKEISYKKKVKCHVCNGDGAKPGTEKRQCEKCHGTGIINDTKRTPFGIFTQQSECDKCHGEGYVIDEKCENCKGKGYEIERKTINITIPKGINNGAIMSVKGEGNDGENNGSPGDLYVIIKIREHEFFKRINNDIVFDMPITYAQAVLGSKIEVPTLDGIEEFELPEGTQPNTTFKLKSKGVPYLNSNSRGDILFTVKIIVPKKINKEQKEKLIKFSESMNQELNVNEKKSIFDRIKDMFE.

The J domain occupies 3–68; sequence NLYEILEVNE…EKRKKYDMYG (66 aa). A CR-type zinc finger spans residues 130–212; it reads GTKKEISYKK…CKGKGYEIER (83 aa). Zn(2+) contacts are provided by cysteine 143, cysteine 146, cysteine 160, cysteine 163, cysteine 186, cysteine 189, cysteine 200, and cysteine 203. CXXCXGXG motif repeat units lie at residues 143-150, 160-167, 186-193, and 200-207; these read CHVCNGDG, CEKCHGTG, CDKCHGEG, and CENCKGKG.

This sequence belongs to the DnaJ family. In terms of assembly, homodimer. The cofactor is Zn(2+).

The protein localises to the cytoplasm. Its function is as follows. Participates actively in the response to hyperosmotic and heat shock by preventing the aggregation of stress-denatured proteins and by disaggregating proteins, also in an autonomous, DnaK-independent fashion. Unfolded proteins bind initially to DnaJ; upon interaction with the DnaJ-bound protein, DnaK hydrolyzes its bound ATP, resulting in the formation of a stable complex. GrpE releases ADP from DnaK; ATP binding to DnaK triggers the release of the substrate protein, thus completing the reaction cycle. Several rounds of ATP-dependent interactions between DnaJ, DnaK and GrpE are required for fully efficient folding. Also involved, together with DnaK and GrpE, in the DNA replication of plasmids through activation of initiation proteins. The chain is Chaperone protein DnaJ from Finegoldia magna (strain ATCC 29328 / DSM 20472 / WAL 2508) (Peptostreptococcus magnus).